The sequence spans 530 residues: Phosphoenolpyruvate carboxykinase (ATP) (530 aa).

The substrate site is built by Arg57, Tyr193, and Lys199. ATP-binding positions include Lys199, His218, and 234–242 (GLSGTGKTT). Mn(2+)-binding residues include Lys199 and His218. Asp255 lines the Mn(2+) pocket. Residues Glu283, Arg320, and Thr445 each coordinate ATP. Arg320 is a binding site for substrate.

It belongs to the phosphoenolpyruvate carboxykinase (ATP) family. It depends on Mn(2+) as a cofactor.

The protein localises to the cytoplasm. It carries out the reaction oxaloacetate + ATP = phosphoenolpyruvate + ADP + CO2. It functions in the pathway carbohydrate biosynthesis; gluconeogenesis. Functionally, involved in the gluconeogenesis. Catalyzes the conversion of oxaloacetate (OAA) to phosphoenolpyruvate (PEP) through direct phosphoryl transfer between the nucleoside triphosphate and OAA. In Leptospira interrogans serogroup Icterohaemorrhagiae serovar copenhageni (strain Fiocruz L1-130), this protein is Phosphoenolpyruvate carboxykinase (ATP).